A 174-amino-acid chain; its full sequence is Co-chaperone protein HscB homolog (174 aa).

In terms of domain architecture, J spans 2-74; sequence NYFDLFNVVP…LRRAEHMLSL (73 aa).

The protein belongs to the HscB family. Interacts with HscA and stimulates its ATPase activity.

Its function is as follows. Co-chaperone involved in the maturation of iron-sulfur cluster-containing proteins. Seems to help targeting proteins to be folded toward HscA. This Shewanella frigidimarina (strain NCIMB 400) protein is Co-chaperone protein HscB homolog.